The following is a 76-amino-acid chain: DNA-directed RNA polymerase subunit epsilon (76 aa).

The protein belongs to the RNA polymerase subunit epsilon family. In terms of assembly, RNAP is composed of a core of 2 alpha, a beta and a beta' subunit. The core is associated with a delta subunit, and at least one of epsilon or omega. When a sigma factor is associated with the core the holoenzyme is formed, which can initiate transcription.

It catalyses the reaction RNA(n) + a ribonucleoside 5'-triphosphate = RNA(n+1) + diphosphate. Its function is as follows. A non-essential component of RNA polymerase (RNAP). The sequence is that of DNA-directed RNA polymerase subunit epsilon from Streptococcus agalactiae serotype Ia (strain ATCC 27591 / A909 / CDC SS700).